Consider the following 239-residue polypeptide: Ribonuclease PH (239 aa).

Residues R86 and G124 to R126 contribute to the phosphate site.

This sequence belongs to the RNase PH family. Homohexameric ring arranged as a trimer of dimers.

The catalysed reaction is tRNA(n+1) + phosphate = tRNA(n) + a ribonucleoside 5'-diphosphate. Its function is as follows. Phosphorolytic 3'-5' exoribonuclease that plays an important role in tRNA 3'-end maturation. Removes nucleotide residues following the 3'-CCA terminus of tRNAs; can also add nucleotides to the ends of RNA molecules by using nucleoside diphosphates as substrates, but this may not be physiologically important. Probably plays a role in initiation of 16S rRNA degradation (leading to ribosome degradation) during starvation. The protein is Ribonuclease PH of Rickettsia felis (strain ATCC VR-1525 / URRWXCal2) (Rickettsia azadi).